A 651-amino-acid chain; its full sequence is Probable Xaa-Pro aminopeptidase P (651 aa).

4 residues coordinate Mn(2+): Asp448, Asp459, Glu557, and Glu571.

It belongs to the peptidase M24B family. It depends on Mn(2+) as a cofactor.

It carries out the reaction Release of any N-terminal amino acid, including proline, that is linked to proline, even from a dipeptide or tripeptide.. Functionally, catalyzes the removal of a penultimate prolyl residue from the N-termini of peptides. In Coccidioides posadasii (strain C735) (Valley fever fungus), this protein is Probable Xaa-Pro aminopeptidase P (AMPP).